We begin with the raw amino-acid sequence, 441 residues long: 23S rRNA (uracil(1939)-C(5))-methyltransferase RlmD (441 aa).

In terms of domain architecture, TRAM spans 1-56 (MSIDSLDMEARGVGRLLNEDGTPGKVIFVEGALPGETVSYRSFRRKPSYEQAHLVE). [4Fe-4S] cluster-binding residues include C69, C75, C78, and C157. S-adenosyl-L-methionine is bound by residues Q265, F294, N299, E315, N343, and D364. C397 (nucleophile) is an active-site residue.

Belongs to the class I-like SAM-binding methyltransferase superfamily. RNA M5U methyltransferase family. RlmD subfamily.

The enzyme catalyses uridine(1939) in 23S rRNA + S-adenosyl-L-methionine = 5-methyluridine(1939) in 23S rRNA + S-adenosyl-L-homocysteine + H(+). In terms of biological role, catalyzes the formation of 5-methyl-uridine at position 1939 (m5U1939) in 23S rRNA. The protein is 23S rRNA (uracil(1939)-C(5))-methyltransferase RlmD of Cupriavidus necator (strain ATCC 17699 / DSM 428 / KCTC 22496 / NCIMB 10442 / H16 / Stanier 337) (Ralstonia eutropha).